The sequence spans 143 residues: MAIERTFSIIKPDAVAKNHIGAIYNRFESAGLKIIASKMVHLTKEQAEGFYAEHSARPFFGALVSFMTSGPVMVQVLEGENAVLANREIMGATNPAEAARGTLRGDYAASIDENAVHGSDALESAAREIAYFFSADEVCPRTR.

Lys11, Phe59, Arg87, Thr93, Arg104, and Asn114 together coordinate ATP. His117 (pros-phosphohistidine intermediate) is an active-site residue.

This sequence belongs to the NDK family. In terms of assembly, homotetramer. It depends on Mg(2+) as a cofactor.

It is found in the cytoplasm. The catalysed reaction is a 2'-deoxyribonucleoside 5'-diphosphate + ATP = a 2'-deoxyribonucleoside 5'-triphosphate + ADP. The enzyme catalyses a ribonucleoside 5'-diphosphate + ATP = a ribonucleoside 5'-triphosphate + ADP. In terms of biological role, major role in the synthesis of nucleoside triphosphates other than ATP. The ATP gamma phosphate is transferred to the NDP beta phosphate via a ping-pong mechanism, using a phosphorylated active-site intermediate. In Shewanella denitrificans (strain OS217 / ATCC BAA-1090 / DSM 15013), this protein is Nucleoside diphosphate kinase.